Reading from the N-terminus, the 392-residue chain is HORMA domain-containing protein 1 (392 aa).

In terms of domain architecture, HORMA spans 25 to 227; it reads QQSLMFVKRL…TPFHTFRLKV (203 aa). Disordered stretches follow at residues 271–292 and 371–392; these read IKTKMNEQNENSGTSEIKEPNL and LESSSQESVLKRRRVSEPNEHT. Serine 374 bears the Phosphoserine mark. Positions 381-384 match the Nuclear localization signal motif; it reads KRRR.

Interacts with HORMAD2. Interacts with IHO1. Post-translationally, phosphorylated at Ser-375 in a SPO11-dependent manner.

The protein resides in the nucleus. The protein localises to the chromosome. In terms of biological role, plays a key role in meiotic progression. Regulates 3 different functions during meiosis: ensures that sufficient numbers of processed DNA double-strand breaks (DSBs) are available for successful homology search by increasing the steady-state numbers of single-stranded DSB ends. Promotes synaptonemal-complex formation independently of its role in homology search. Plays a key role in the male mid-pachytene checkpoint and the female meiotic prophase checkpoint: required for efficient build-up of ATR activity on unsynapsed chromosome regions, a process believed to form the basis of meiotic silencing of unsynapsed chromatin (MSUC) and meiotic prophase quality control in both sexes. The sequence is that of HORMA domain-containing protein 1 (Hormad1) from Rattus norvegicus (Rat).